Reading from the N-terminus, the 523-residue chain is 2-isopropylmalate synthase (523 aa).

Residues 5 to 267 (VIIFDTTLRD…HTNINHHEIW (263 aa)) form the Pyruvate carboxyltransferase domain. Mn(2+) is bound by residues D14, H202, H204, and N238. The interval 392–523 (RLDYFSVQSG…QNKENNKETV (132 aa)) is regulatory domain.

The protein belongs to the alpha-IPM synthase/homocitrate synthase family. LeuA type 1 subfamily. Homodimer. It depends on Mn(2+) as a cofactor.

The protein localises to the cytoplasm. It catalyses the reaction 3-methyl-2-oxobutanoate + acetyl-CoA + H2O = (2S)-2-isopropylmalate + CoA + H(+). The protein operates within amino-acid biosynthesis; L-leucine biosynthesis; L-leucine from 3-methyl-2-oxobutanoate: step 1/4. Functionally, catalyzes the condensation of the acetyl group of acetyl-CoA with 3-methyl-2-oxobutanoate (2-ketoisovalerate) to form 3-carboxy-3-hydroxy-4-methylpentanoate (2-isopropylmalate). The protein is 2-isopropylmalate synthase of Salmonella agona (strain SL483).